Here is a 175-residue protein sequence, read N- to C-terminus: Gamma-crystallin B (175 aa).

2 Beta/gamma crystallin 'Greek key' domains span residues 2–40 and 41–83; these read GKIT…RVES and GCWM…HLIP. A connecting peptide region spans residues 84–88; that stretch reads PHSGT. 2 consecutive Beta/gamma crystallin 'Greek key' domains span residues 89–129 and 130–172; these read YRMK…NVLE and GSWI…RRVM.

It belongs to the beta/gamma-crystallin family. As to quaternary structure, monomer.

Its function is as follows. Crystallins are the dominant structural components of the vertebrate eye lens. The polypeptide is Gamma-crystallin B (CRYGB) (Macaca mulatta (Rhesus macaque)).